The following is a 211-amino-acid chain: Protein GrpE (211 aa).

Residues 1–43 (MTDETTKNGPDATAADAAADAAANVEIDNSVQEEAKQPDPLEL) form a disordered region. Residues 11-23 (DATAADAAADAAA) show a composition bias toward low complexity. A compositionally biased stretch (basic and acidic residues) spans 33 to 43 (EEAKQPDPLEL).

The protein belongs to the GrpE family. As to quaternary structure, homodimer.

It is found in the cytoplasm. Functionally, participates actively in the response to hyperosmotic and heat shock by preventing the aggregation of stress-denatured proteins, in association with DnaK and GrpE. It is the nucleotide exchange factor for DnaK and may function as a thermosensor. Unfolded proteins bind initially to DnaJ; upon interaction with the DnaJ-bound protein, DnaK hydrolyzes its bound ATP, resulting in the formation of a stable complex. GrpE releases ADP from DnaK; ATP binding to DnaK triggers the release of the substrate protein, thus completing the reaction cycle. Several rounds of ATP-dependent interactions between DnaJ, DnaK and GrpE are required for fully efficient folding. In Rhizobium etli (strain ATCC 51251 / DSM 11541 / JCM 21823 / NBRC 15573 / CFN 42), this protein is Protein GrpE.